A 380-amino-acid chain; its full sequence is Putative 12-oxophytodienoate reductase 4 (380 aa).

FMN is bound by residues 36-38, alanine 69, and glutamine 111; that span reads PLT. 183 to 186 contributes to the substrate binding site; sequence HGAH. The active-site Proton donor is tyrosine 188. Arginine 235 contacts FMN. Residue arginine 276 coordinates substrate. FMN-binding positions include glycine 306 and 327 to 328; that span reads GR.

This sequence belongs to the NADH:flavin oxidoreductase/NADH oxidase family. FMN serves as cofactor.

Functionally, putative oxophytodienoate reductase that may be involved in the biosynthesis or metabolism of oxylipin signaling molecules. This Oryza sativa subsp. japonica (Rice) protein is Putative 12-oxophytodienoate reductase 4 (OPR4).